Here is a 185-residue protein sequence, read N- to C-terminus: Elongation factor P (185 aa).

Belongs to the elongation factor P family.

It localises to the cytoplasm. The protein operates within protein biosynthesis; polypeptide chain elongation. Functionally, involved in peptide bond synthesis. Stimulates efficient translation and peptide-bond synthesis on native or reconstituted 70S ribosomes in vitro. Probably functions indirectly by altering the affinity of the ribosome for aminoacyl-tRNA, thus increasing their reactivity as acceptors for peptidyl transferase. The chain is Elongation factor P from Lysinibacillus sphaericus (strain C3-41).